Consider the following 309-residue polypeptide: Taste receptor type 2 member 124 (309 aa).

The Extracellular portion of the chain corresponds to 1–7 (MVPVLHS). A helical transmembrane segment spans residues 8–28 (LSTIILIAEFVWGNLSNGLIV). The Cytoplasmic portion of the chain corresponds to 29-46 (LKNCIDWINKKELSTVDQ). A helical membrane pass occupies residues 47–67 (ILIVLAISRISLIWETLIIWV). The Extracellular segment spans residues 68 to 86 (KDQLISSITIEELKIIVFS). Residues 87-107 (FILSSHFSLWLATALSIFYLF) traverse the membrane as a helical segment. Topologically, residues 108–127 (RIPNCYWQIFLYLKWRIKQL) are cytoplasmic. A helical transmembrane segment spans residues 128-148 (IVHMLLGSLVFLVANMIQITI). At 149-183 (TLEERFYQYGGNTSVNSMETEFSILIELMLFNMTM) the chain is on the extracellular side. Asn-160 and Asn-180 each carry an N-linked (GlcNAc...) asparagine glycan. The helical transmembrane segment at 184–204 (FSIIPFSLALISFLLLIFSLW) threads the bilayer. Residues 205 to 230 (KHLQKMPLNSRGDRDPSATAHRNALR) lie on the Cytoplasmic side of the membrane. The helical transmembrane segment at 231-251 (ILVSFLLLYTIYFLSLLISWV) threads the bilayer. At 252–261 (AQKNQSELVH) the chain is on the extracellular side. Residue Asn-255 is glycosylated (N-linked (GlcNAc...) asparagine). Residues 262–282 (IICMITSLVYPSFHSYILILG) traverse the membrane as a helical segment. At 283–309 (NYKLKQTSLWVMRQLGCRMKRQNTPTT) the chain is on the cytoplasmic side.

The protein belongs to the G-protein coupled receptor T2R family.

It localises to the membrane. Functionally, putative taste receptor which may play a role in the perception of bitterness. This chain is Taste receptor type 2 member 124, found in Mus musculus (Mouse).